A 458-amino-acid polypeptide reads, in one-letter code: KAT8 regulatory NSL complex subunit 2 (458 aa).

A Glycyl lysine isopeptide (Lys-Gly) (interchain with G-Cter in SUMO2) cross-link involves residue Lys78. A disordered region spans residues 126–182 (ELGSQTPESSRSEASRILDEDSWSDGDQEPITVDQTWRGDPDSEADSIDSDQEDPLK). Thr131 bears the Phosphothreonine mark. A compositionally biased stretch (basic and acidic residues) spans 135–144 (SRSEASRILD). Phosphoserine is present on residues Ser147, Ser149, Ser168, Ser172, and Ser175. Positions 167-178 (DSEADSIDSDQE) are enriched in acidic residues. The segment at 308–364 (DVRCSNQSLPMTRHCLTHICQDTNQVLFKCCQGSEEVPCNKPVPVSLSEDPCCPLHF) is required for interaction with other NSL complex members. Positions 419–458 (QMAGDGCRSQGPRNSEKAPAPLPQSGIATANGKPEPTSVS) are disordered.

As to quaternary structure, component of the NSL complex at least composed of KAT8/MOF, KANSL1, KANSL2, KANSL3, MCRS1, PHF20, OGT1/OGT, WDR5 and HCFC1.

It localises to the nucleus. Its subcellular location is the mitochondrion. Functionally, non-catalytic component of the NSL histone acetyltransferase complex, a multiprotein complex that mediates histone H4 acetylation at 'Lys-5'- and 'Lys-8' (H4K5ac and H4K8ac) at transcription start sites and promotes transcription initiation. Required for NSL complex stability and for transcription of intraciliary transport genes in both ciliated and non-ciliated cells by regulating histone H4 acetylation at 'Lys-5'- and 'Lys-12' (H4K5ac and H4K12ac). This is necessary for cilium assembly in ciliated cells and for organization of the microtubule cytoskeleton in non-ciliated cells. Required within the NSL complex to maintain nuclear architecture stability by promoting KAT8-mediated acetylation of lamin LMNA. This chain is KAT8 regulatory NSL complex subunit 2 (KANSL2), found in Bos taurus (Bovine).